A 97-amino-acid chain; its full sequence is MKLRPLHDRVVIRRSEEEKKTAGGIVLPGSAAEKANHGEILAVGPGKALESGEVRALSVKVGDKVVFGPYSGSNTVKVDGEDLLVMSENEILAVIEG.

The protein belongs to the GroES chaperonin family. Heptamer of 7 subunits arranged in a ring. Interacts with the chaperonin GroEL.

It is found in the cytoplasm. Together with the chaperonin GroEL, plays an essential role in assisting protein folding. The GroEL-GroES system forms a nano-cage that allows encapsulation of the non-native substrate proteins and provides a physical environment optimized to promote and accelerate protein folding. GroES binds to the apical surface of the GroEL ring, thereby capping the opening of the GroEL channel. In Pseudomonas fluorescens (strain Pf0-1), this protein is Co-chaperonin GroES.